The chain runs to 333 residues: Probable tRNA pseudouridine synthase B (333 aa).

Residue D66 is the Nucleophile of the active site. One can recognise a PUA domain in the interval 233 to 308 (LKKIIVKDSA…EVVEITRVIM (76 aa)).

The protein belongs to the pseudouridine synthase TruB family. Type 2 subfamily.

The catalysed reaction is uridine(55) in tRNA = pseudouridine(55) in tRNA. Functionally, could be responsible for synthesis of pseudouridine from uracil-55 in the psi GC loop of transfer RNAs. The sequence is that of Probable tRNA pseudouridine synthase B from Methanococcus maripaludis (strain C6 / ATCC BAA-1332).